A 493-amino-acid polypeptide reads, in one-letter code: Cobyric acid synthase (493 aa).

Residues P246 to F440 form the GATase cobBQ-type domain. C326 serves as the catalytic Nucleophile. H432 is an active-site residue.

Belongs to the CobB/CobQ family. CobQ subfamily.

It functions in the pathway cofactor biosynthesis; adenosylcobalamin biosynthesis. Functionally, catalyzes amidations at positions B, D, E, and G on adenosylcobyrinic A,C-diamide. NH(2) groups are provided by glutamine, and one molecule of ATP is hydrogenolyzed for each amidation. The protein is Cobyric acid synthase of Clostridium botulinum (strain Okra / Type B1).